We begin with the raw amino-acid sequence, 218 residues long: Small ribosomal subunit protein uS3c (218 aa).

The KH type-2 domain maps to 47-118 (VQKNIRISSG…KLNIAITRIS (72 aa)).

This sequence belongs to the universal ribosomal protein uS3 family. Part of the 30S ribosomal subunit.

It localises to the plastid. The protein localises to the chloroplast. This chain is Small ribosomal subunit protein uS3c (rps3), found in Barbarea verna (Land cress).